We begin with the raw amino-acid sequence, 406 residues long: MTFPVEKVRADFPILQREVNGLPLAYLDSAASAQKPNQVIDAESAFYRHGYAAVHRGIHTLSVQATESMENVRKQASRFINARSAEELVFVRGTTEGINLVANSWGTENIRAGDNIIISEMEHHANIVPWQILCERKGAELRVIPLHPDGTLRLETLAALFDDRTRLLAITHVSNVLGTENPLPDMIALARQHGAKVLVDGAQAVMHHAVDVQALDCDFYVFSGHKLYGPTGIGILYVKEALLQEMPPWEGGGSMISTVSLTQGTTWAKAPWRFEAGTPNTGGIIGLGAAIDYVTSLGLDKIGDYEQMLMRYALEQLAQVPDITLYGPAQRLGVIAFNLGKHHAYDVGSFLDNYGIAVRTGHHCAMPLMAWYGVPAMCRASLAMYNTHEEVDRLVAGLTRIHRLLG.

N6-(pyridoxal phosphate)lysine is present on K226. C364 serves as the catalytic Cysteine persulfide intermediate.

Belongs to the class-V pyridoxal-phosphate-dependent aminotransferase family. Csd subfamily. Homodimer. Interacts with SufE and the SufBCD complex composed of SufB, SufC and SufD. The interaction with SufE is required to mediate the direct transfer of the sulfur atom from the S-sulfanylcysteine. Pyridoxal 5'-phosphate is required as a cofactor.

The protein localises to the cytoplasm. It carries out the reaction (sulfur carrier)-H + L-cysteine = (sulfur carrier)-SH + L-alanine. The catalysed reaction is L-selenocysteine + AH2 = hydrogenselenide + L-alanine + A + H(+). It functions in the pathway cofactor biosynthesis; iron-sulfur cluster biosynthesis. Its function is as follows. Cysteine desulfurases mobilize the sulfur from L-cysteine to yield L-alanine, an essential step in sulfur metabolism for biosynthesis of a variety of sulfur-containing biomolecules. Component of the suf operon, which is activated and required under specific conditions such as oxidative stress and iron limitation. Acts as a potent selenocysteine lyase in vitro, that mobilizes selenium from L-selenocysteine. Selenocysteine lyase activity is however unsure in vivo. This is Cysteine desulfurase from Salmonella dublin (strain CT_02021853).